We begin with the raw amino-acid sequence, 350 residues long: Guanine nucleotide-binding protein G(t) subunit alpha-1 (350 aa).

The disordered stretch occupies residues 1 to 21 (MGAGASAEEKHSRELEKKLKE). G2 carries the N-myristoyl glycine lipid modification. Residues 7-21 (AEEKHSRELEKKLKE) are compositionally biased toward basic and acidic residues. The G-alpha domain occupies 28-350 (RTVKLLLLGA…KENLKDCGLF (323 aa)). Positions 31–44 (KLLLLGAGESGKST) are G1 motif. 36-43 (GAGESGKS) contacts GTP. Residue S43 participates in Mg(2+) binding. At Y142 the chain carries Phosphotyrosine. GTP contacts are provided by residues D146, 171–177 (LRSRVKT), G199, 265–268 (NKKD), and A322. The interval 169 to 177 (DVLRSRVKT) is G2 motif. T177 contributes to the Mg(2+) binding site. The G3 motif stretch occupies residues 192-201 (FRMFDVGGQR). The interval 261–268 (VLFLNKKD) is G4 motif. Residues 320–325 (TCATDT) are G5 motif. The interval 340-350 (IKENLKDCGLF) is interaction with RHO.

The protein belongs to the G-alpha family. G(i/o/t/z) subfamily. Heterotrimeric G proteins are composed of 3 subunits alpha, beta and gamma. The alpha chain contains the guanine nucleotide binding site. Interacts with RHO. Interacts with RGS9 and PDE6G. Interacts (when myristoylated) with UNC119; interaction is required for localization in sensory neurons. In terms of tissue distribution, in the retina, expressed in the rod photoreceptors.

It is found in the cell projection. The protein localises to the cilium. Its subcellular location is the photoreceptor outer segment. The protein resides in the membrane. It localises to the photoreceptor inner segment. Functions as a signal transducer for the rod photoreceptor RHO. Required for normal RHO-mediated light perception by the retina. Guanine nucleotide-binding proteins (G proteins) function as transducers downstream of G protein-coupled receptors (GPCRs), such as the photoreceptor RHO. The alpha chain contains the guanine nucleotide binding site and alternates between an active, GTP-bound state and an inactive, GDP-bound state. Activated RHO promotes GDP release and GTP binding. Signaling is mediated via downstream effector proteins, such as cGMP-phosphodiesterase. The chain is Guanine nucleotide-binding protein G(t) subunit alpha-1 (Gnat1) from Mus musculus (Mouse).